We begin with the raw amino-acid sequence, 86 residues long: Anti-adapter protein IraP (86 aa).

A coiled-coil region spans residues 1–36 (MKNLIAELLFKLAQKEEESKELCAQVEALEIIVTAM).

It belongs to the IraP family. As to quaternary structure, interacts with RssB.

Its subcellular location is the cytoplasm. Inhibits RpoS proteolysis by regulating RssB activity, thereby increasing the stability of the sigma stress factor RpoS especially during phosphate starvation, but also in stationary phase and during nitrogen starvation. Its effect on RpoS stability is due to its interaction with RssB, which probably blocks the interaction of RssB with RpoS, and the consequent delivery of the RssB-RpoS complex to the ClpXP protein degradation pathway. The sequence is that of Anti-adapter protein IraP from Shigella flexneri serotype 5b (strain 8401).